The sequence spans 338 residues: 1-aminocyclopropane-1-carboxylate deaminase (338 aa).

N6-(pyridoxal phosphate)lysine is present on Lys-51. The active-site Nucleophile is the Ser-78.

This sequence belongs to the ACC deaminase/D-cysteine desulfhydrase family. In terms of assembly, homotrimer. The cofactor is pyridoxal 5'-phosphate.

The catalysed reaction is 1-aminocyclopropane-1-carboxylate + H2O = 2-oxobutanoate + NH4(+). In terms of biological role, catalyzes a cyclopropane ring-opening reaction, the irreversible conversion of 1-aminocyclopropane-1-carboxylate (ACC) to ammonia and alpha-ketobutyrate. Allows growth on ACC as a nitrogen source. This is 1-aminocyclopropane-1-carboxylate deaminase from Paraburkholderia xenovorans (strain LB400).